We begin with the raw amino-acid sequence, 254 residues long: Acetylglutamate kinase (254 aa).

Residues 40–41, Arg-62, and Asn-158 contribute to the substrate site; that span reads GG.

It belongs to the acetylglutamate kinase family. ArgB subfamily.

It is found in the cytoplasm. The catalysed reaction is N-acetyl-L-glutamate + ATP = N-acetyl-L-glutamyl 5-phosphate + ADP. Its pathway is amino-acid biosynthesis; L-arginine biosynthesis; N(2)-acetyl-L-ornithine from L-glutamate: step 2/4. Functionally, catalyzes the ATP-dependent phosphorylation of N-acetyl-L-glutamate. This chain is Acetylglutamate kinase, found in Chloroflexus aurantiacus (strain ATCC 29366 / DSM 635 / J-10-fl).